A 147-amino-acid chain; its full sequence is D-aminoacyl-tRNA deacylase (147 aa).

Positions 137 to 138 match the Gly-cisPro motif, important for rejection of L-amino acids motif; that stretch reads GP.

Belongs to the DTD family. Homodimer.

Its subcellular location is the cytoplasm. The enzyme catalyses glycyl-tRNA(Ala) + H2O = tRNA(Ala) + glycine + H(+). It carries out the reaction a D-aminoacyl-tRNA + H2O = a tRNA + a D-alpha-amino acid + H(+). In terms of biological role, an aminoacyl-tRNA editing enzyme that deacylates mischarged D-aminoacyl-tRNAs. Also deacylates mischarged glycyl-tRNA(Ala), protecting cells against glycine mischarging by AlaRS. Acts via tRNA-based rather than protein-based catalysis; rejects L-amino acids rather than detecting D-amino acids in the active site. By recycling D-aminoacyl-tRNA to D-amino acids and free tRNA molecules, this enzyme counteracts the toxicity associated with the formation of D-aminoacyl-tRNA entities in vivo and helps enforce protein L-homochirality. This is D-aminoacyl-tRNA deacylase from Exiguobacterium sp. (strain ATCC BAA-1283 / AT1b).